Here is a 156-residue protein sequence, read N- to C-terminus: ATP synthase subunit b (156 aa).

A helical membrane pass occupies residues 5–25; the sequence is LTLIGQAIAFAVFVWFCMKFV.

It belongs to the ATPase B chain family. In terms of assembly, F-type ATPases have 2 components, F(1) - the catalytic core - and F(0) - the membrane proton channel. F(1) has five subunits: alpha(3), beta(3), gamma(1), delta(1), epsilon(1). F(0) has three main subunits: a(1), b(2) and c(10-14). The alpha and beta chains form an alternating ring which encloses part of the gamma chain. F(1) is attached to F(0) by a central stalk formed by the gamma and epsilon chains, while a peripheral stalk is formed by the delta and b chains.

The protein resides in the cell inner membrane. In terms of biological role, f(1)F(0) ATP synthase produces ATP from ADP in the presence of a proton or sodium gradient. F-type ATPases consist of two structural domains, F(1) containing the extramembraneous catalytic core and F(0) containing the membrane proton channel, linked together by a central stalk and a peripheral stalk. During catalysis, ATP synthesis in the catalytic domain of F(1) is coupled via a rotary mechanism of the central stalk subunits to proton translocation. Its function is as follows. Component of the F(0) channel, it forms part of the peripheral stalk, linking F(1) to F(0). This chain is ATP synthase subunit b, found in Chromohalobacter salexigens (strain ATCC BAA-138 / DSM 3043 / CIP 106854 / NCIMB 13768 / 1H11).